The chain runs to 426 residues: Serine--tRNA ligase (426 aa).

Threonine 233–glutamate 235 contacts L-serine. Arginine 264–glutamate 266 contributes to the ATP binding site. Glutamate 287 lines the L-serine pocket. Position 351-354 (glutamate 351–serine 354) interacts with ATP. Residue serine 387 coordinates L-serine.

Belongs to the class-II aminoacyl-tRNA synthetase family. Type-1 seryl-tRNA synthetase subfamily. As to quaternary structure, homodimer. The tRNA molecule binds across the dimer.

It is found in the cytoplasm. The catalysed reaction is tRNA(Ser) + L-serine + ATP = L-seryl-tRNA(Ser) + AMP + diphosphate + H(+). It carries out the reaction tRNA(Sec) + L-serine + ATP = L-seryl-tRNA(Sec) + AMP + diphosphate + H(+). Its pathway is aminoacyl-tRNA biosynthesis; selenocysteinyl-tRNA(Sec) biosynthesis; L-seryl-tRNA(Sec) from L-serine and tRNA(Sec): step 1/1. Functionally, catalyzes the attachment of serine to tRNA(Ser). Is also able to aminoacylate tRNA(Sec) with serine, to form the misacylated tRNA L-seryl-tRNA(Sec), which will be further converted into selenocysteinyl-tRNA(Sec). The sequence is that of Serine--tRNA ligase from Pseudomonas savastanoi pv. phaseolicola (strain 1448A / Race 6) (Pseudomonas syringae pv. phaseolicola (strain 1448A / Race 6)).